Here is a 903-residue protein sequence, read N- to C-terminus: Protein translocase subunit SecA (903 aa).

ATP is bound by residues Gln87, 105 to 109 (GEGKT), and Asp513. The segment covering 840-853 (MEAQRRAQAEEAAR) has biased composition (basic and acidic residues). Residues 840-903 (MEAQRRAQAE…KYKQCHGQIN (64 aa)) form a disordered region. The Zn(2+) site is built by Cys887, Cys889, Cys898, and His899.

This sequence belongs to the SecA family. In terms of assembly, monomer and homodimer. Part of the essential Sec protein translocation apparatus which comprises SecA, SecYEG and auxiliary proteins SecDF-YajC and YidC. It depends on Zn(2+) as a cofactor.

The protein resides in the cell inner membrane. The protein localises to the cytoplasm. The catalysed reaction is ATP + H2O + cellular proteinSide 1 = ADP + phosphate + cellular proteinSide 2.. In terms of biological role, part of the Sec protein translocase complex. Interacts with the SecYEG preprotein conducting channel. Has a central role in coupling the hydrolysis of ATP to the transfer of proteins into and across the cell membrane, serving both as a receptor for the preprotein-SecB complex and as an ATP-driven molecular motor driving the stepwise translocation of polypeptide chains across the membrane. In Vibrio cholerae serotype O1 (strain M66-2), this protein is Protein translocase subunit SecA.